Consider the following 245-residue polypeptide: Octanoyltransferase (245 aa).

Residues 54 to 242 form the BPL/LPL catalytic domain; the sequence is KTAHEQVWLL…AFEKIFGPTI (189 aa). Residues 93-100, 173-175, and 186-188 each bind substrate; these read RGGEFTYH, AIG, and GVS. Cys204 functions as the Acyl-thioester intermediate in the catalytic mechanism.

This sequence belongs to the LipB family.

It is found in the cytoplasm. It catalyses the reaction octanoyl-[ACP] + L-lysyl-[protein] = N(6)-octanoyl-L-lysyl-[protein] + holo-[ACP] + H(+). It functions in the pathway protein modification; protein lipoylation via endogenous pathway; protein N(6)-(lipoyl)lysine from octanoyl-[acyl-carrier-protein]: step 1/2. In terms of biological role, catalyzes the transfer of endogenously produced octanoic acid from octanoyl-acyl-carrier-protein onto the lipoyl domains of lipoate-dependent enzymes. Lipoyl-ACP can also act as a substrate although octanoyl-ACP is likely to be the physiological substrate. This Bartonella tribocorum (strain CIP 105476 / IBS 506) protein is Octanoyltransferase.